The following is a 580-amino-acid chain: Cleavage stimulation factor subunit 2 (580 aa).

Phosphoserine is present on Ser-14. One can recognise an RRM domain in the interval 16–94 (RSVFVGNIPY…RALRVDNAAS (79 aa)). An interactions with CSTF3 and SYMPK region spans residues 108 to 248 (APVIESPYGE…VNGAPPMMQA (141 aa)). Lys-189 is covalently cross-linked (Glycyl lysine isopeptide (Lys-Gly) (interchain with G-Cter in SUMO2)). The residue at position 308 (Arg-308) is an Omega-N-methylarginine. Disordered regions lie at residues 311 to 331 (LPTN…DPRG) and 347 to 414 (LGPP…RGLD). Composition is skewed to basic and acidic residues over residues 363 to 376 (PGHE…HDMR) and 405 to 414 (RGGRDPRGLD). A 1; approximate repeat occupies 413 to 417 (LDARG). The interval 413-472 (LDARGMEARAMEARGLDARGLEARAMEARAMEARAMEARAMEARAMEARAMEARGMDTRG) is 12 X 5 AA tandem repeats of M-E-A-R-[AG]. Tandem repeats lie at residues 418 to 422 (MEARA) and 423 to 427 (MEARG). One copy of the 4; approximate repeat lies at 428 to 432 (LDARG). One copy of the 5; approximate repeat lies at 433-437 (LEARA). A run of 6 repeats spans residues 438–442 (MEARA), 443–447 (MEARA), 448–452 (MEARA), 453–457 (MEARA), 458–462 (MEARA), and 463–467 (MEARG). The stretch at 468–472 (MDTRG) is one 12; approximate repeat. An omega-N-methylarginine mark is found at Arg-471 and Arg-478. Residues 512-536 (MQGASMQGGSQPGGFSPGQSQVTPQ) form a disordered region. Positions 517 to 580 (MQGGSQPGGF…EQIQKSTGAP (64 aa)) are interaction with RPO2TC1. Ser-521 and Ser-527 each carry phosphoserine.

In terms of assembly, the CSTF complex is composed of CSTF1 (50 kDa subunit), CSTF2 (64 kDa subunit) and CSTF3 (77 kDa subunit). CSTF2 directly interacts with CSTF3, SYMPK and RPO2TC1. Interacts with HSF1 in heat-stressed cells. Interacts with CPSF2, CPSF3 and FIP1L1. Interacts with DDX1. As to expression, expressed in most somatic cell types (at protein level). Highly expressed in testis, except in meiotic spermatocytes.

The protein localises to the nucleus. Its function is as follows. One of the multiple factors required for polyadenylation and 3'-end cleavage of mammalian pre-mRNAs. This subunit is directly involved in the binding to pre-mRNAs. This is Cleavage stimulation factor subunit 2 (Cstf2) from Mus musculus (Mouse).